The sequence spans 412 residues: Alpha-1-antiproteinase (412 aa).

A signal peptide spans 1-24 (MTPSISWGLLLLAGLFCLVPSFLA). A Phosphoserine modification is found at Ser33. N-linked (GlcNAc...) asparagine glycans are attached at residues Asn100, Asn133, Asn264, and Asn313. Residues 367 to 386 (AATVLQAVPMSMPPILNFNK) form an RCL region. Phosphoserine is present on Ser377.

The protein belongs to the serpin family. As to quaternary structure, interacts with CELA2A. Interacts with ERGIC3 and LMAN1/ERGIC53. Interacts with PRSS1/Trypsin. Expressed not only in liver but also in kidney tubule cells, where it is regulated by androgens during development.

It is found in the secreted. In terms of biological role, inhibitor of serine proteases. Its primary target is elastase, but it also has a moderate affinity for plasmin and thrombin. This chain is Alpha-1-antiproteinase (Serpina1), found in Mus caroli (Ryukyu mouse).